The following is an 89-amino-acid chain: Large ribosomal subunit protein bL27 (89 aa).

The segment at 1-24 (MAHKKGTGSTRNGRDSNAKRLGVK) is disordered.

It belongs to the bacterial ribosomal protein bL27 family.

The protein is Large ribosomal subunit protein bL27 of Synechococcus sp. (strain JA-2-3B'a(2-13)) (Cyanobacteria bacterium Yellowstone B-Prime).